We begin with the raw amino-acid sequence, 143 residues long: Regulator of ribonuclease activity B (143 aa).

The interval 113-143 (EDPNAEEDEYGDDGEFFDDEDEADFNNAKVH) is disordered. Residues 115–136 (PNAEEDEYGDDGEFFDDEDEAD) show a composition bias toward acidic residues.

It belongs to the RraB family. Interacts with the C-terminal region of Rne.

It localises to the cytoplasm. Its function is as follows. Globally modulates RNA abundance by binding to RNase E (Rne) and regulating its endonucleolytic activity. Can modulate Rne action in a substrate-dependent manner by altering the composition of the degradosome. This Haemophilus ducreyi (strain 35000HP / ATCC 700724) protein is Regulator of ribonuclease activity B.